The primary structure comprises 250 residues: 5'-nucleotidase SurE (250 aa).

A divalent metal cation is bound by residues D8, D9, S39, and N91.

Belongs to the SurE nucleotidase family. A divalent metal cation is required as a cofactor.

The protein localises to the cytoplasm. The catalysed reaction is a ribonucleoside 5'-phosphate + H2O = a ribonucleoside + phosphate. Functionally, nucleotidase that shows phosphatase activity on nucleoside 5'-monophosphates. This is 5'-nucleotidase SurE from Leptospira interrogans serogroup Icterohaemorrhagiae serovar copenhageni (strain Fiocruz L1-130).